The primary structure comprises 140 residues: MTLNLCVLTPNRTVWDSKVNEIILSTNNGQIGVLPDHASIATAVDIGILRIRLNDQWLTMALMGGFARIGNNEITVLVNDAEKSSDIDSQEAQQTLEIAEANLRKAEGKRQKIEANLALRRARTRVETINAISELVGVPE.

It belongs to the ATPase epsilon chain family. F-type ATPases have 2 components, CF(1) - the catalytic core - and CF(0) - the membrane proton channel. CF(1) has five subunits: alpha(3), beta(3), gamma(1), delta(1), epsilon(1). CF(0) has three main subunits: a, b and c.

The protein localises to the plastid. It localises to the chloroplast thylakoid membrane. Produces ATP from ADP in the presence of a proton gradient across the membrane. The protein is ATP synthase epsilon chain, chloroplastic of Panax ginseng (Korean ginseng).